The chain runs to 365 residues: Ribosomal RNA large subunit methyltransferase M (365 aa).

S-adenosyl-L-methionine contacts are provided by residues serine 187, 220–223 (CPGG), aspartate 239, aspartate 259, and aspartate 276. Lysine 305 acts as the Proton acceptor in catalysis.

The protein belongs to the class I-like SAM-binding methyltransferase superfamily. RNA methyltransferase RlmE family. RlmM subfamily. As to quaternary structure, monomer.

Its subcellular location is the cytoplasm. The enzyme catalyses cytidine(2498) in 23S rRNA + S-adenosyl-L-methionine = 2'-O-methylcytidine(2498) in 23S rRNA + S-adenosyl-L-homocysteine + H(+). In terms of biological role, catalyzes the 2'-O-methylation at nucleotide C2498 in 23S rRNA. The polypeptide is Ribosomal RNA large subunit methyltransferase M (Psychromonas ingrahamii (strain DSM 17664 / CCUG 51855 / 37)).